The primary structure comprises 260 residues: DNA repair protein RecO (260 aa).

It belongs to the RecO family.

Involved in DNA repair and RecF pathway recombination. This Chlorobaculum parvum (strain DSM 263 / NCIMB 8327) (Chlorobium vibrioforme subsp. thiosulfatophilum) protein is DNA repair protein RecO.